The chain runs to 311 residues: L-lactate dehydrogenase 2 (311 aa).

Residues valine 14, aspartate 35, and arginine 40 each coordinate NAD(+). Residue arginine 90 coordinates substrate. Residues serine 103, 120-122 (ATN), and threonine 145 contribute to the NAD(+) site. Substrate is bound at residue 122-125 (NPCD). Position 150–153 (150–153 (DTTR)) interacts with substrate. The active-site Proton acceptor is histidine 177. Position 230 (threonine 230) interacts with substrate.

Belongs to the LDH/MDH superfamily. LDH family. Homotetramer.

The protein resides in the cytoplasm. It catalyses the reaction (S)-lactate + NAD(+) = pyruvate + NADH + H(+). Its pathway is fermentation; pyruvate fermentation to lactate; (S)-lactate from pyruvate: step 1/1. In terms of biological role, catalyzes the conversion of lactate to pyruvate. In Listeria monocytogenes serotype 4b (strain F2365), this protein is L-lactate dehydrogenase 2.